The primary structure comprises 333 residues: tRNA N6-adenosine threonylcarbamoyltransferase (333 aa).

Fe cation contacts are provided by histidine 110 and histidine 114. Residues 133 to 137, aspartate 166, glycine 179, aspartate 183, and asparagine 275 each bind substrate; that span reads IVSGG. Residue aspartate 302 participates in Fe cation binding.

It belongs to the KAE1 / TsaD family. Fe(2+) is required as a cofactor.

It is found in the cytoplasm. It catalyses the reaction L-threonylcarbamoyladenylate + adenosine(37) in tRNA = N(6)-L-threonylcarbamoyladenosine(37) in tRNA + AMP + H(+). Required for the formation of a threonylcarbamoyl group on adenosine at position 37 (t(6)A37) in tRNAs that read codons beginning with adenine. Is involved in the transfer of the threonylcarbamoyl moiety of threonylcarbamoyl-AMP (TC-AMP) to the N6 group of A37, together with TsaE and TsaB. TsaD likely plays a direct catalytic role in this reaction. This chain is tRNA N6-adenosine threonylcarbamoyltransferase, found in Thermodesulfovibrio yellowstonii (strain ATCC 51303 / DSM 11347 / YP87).